We begin with the raw amino-acid sequence, 413 residues long: Chemotactic signal transduction system substrate-binding protein BasB (413 aa).

Residues methionine 1–glycine 31 form the signal peptide.

The protein resides in the cell membrane. Its function is as follows. Mediates chemotaxis towards five attractant amino acids (leucine, isoleucine, valine, methionine and cysteine). May function as a receptor that binds the amino acids and transduces a signal to BasT. Has probably no additional role in transport. The polypeptide is Chemotactic signal transduction system substrate-binding protein BasB (basB) (Halobacterium salinarum (strain ATCC 29341 / DSM 671 / R1)).